A 209-amino-acid chain; its full sequence is 8-oxoguanine DNA glycosylase/AP lyase (209 aa).

Residues Lys132 and Asp150 contribute to the active site.

This sequence belongs to the type-2 OGG1 family.

The catalysed reaction is 2'-deoxyribonucleotide-(2'-deoxyribose 5'-phosphate)-2'-deoxyribonucleotide-DNA = a 3'-end 2'-deoxyribonucleotide-(2,3-dehydro-2,3-deoxyribose 5'-phosphate)-DNA + a 5'-end 5'-phospho-2'-deoxyribonucleoside-DNA + H(+). Functionally, catalyzes the excision of an oxidatively damaged form of guanine (7,8-dihydro-8-oxoguanine = 8-oxoG) from DNA. Also cleaves the DNA backbone at apurinic/apyrimidinic sites (AP sites). The protein is 8-oxoguanine DNA glycosylase/AP lyase of Picrophilus torridus (strain ATCC 700027 / DSM 9790 / JCM 10055 / NBRC 100828 / KAW 2/3).